A 223-amino-acid polypeptide reads, in one-letter code: Deoxyribose-phosphate aldolase (223 aa).

The active-site Proton donor/acceptor is Asp-92. Catalysis depends on Lys-158, which acts as the Schiff-base intermediate with acetaldehyde. Lys-188 (proton donor/acceptor) is an active-site residue.

The protein belongs to the DeoC/FbaB aldolase family. DeoC type 1 subfamily.

Its subcellular location is the cytoplasm. The enzyme catalyses 2-deoxy-D-ribose 5-phosphate = D-glyceraldehyde 3-phosphate + acetaldehyde. Its pathway is carbohydrate degradation; 2-deoxy-D-ribose 1-phosphate degradation; D-glyceraldehyde 3-phosphate and acetaldehyde from 2-deoxy-alpha-D-ribose 1-phosphate: step 2/2. Catalyzes a reversible aldol reaction between acetaldehyde and D-glyceraldehyde 3-phosphate to generate 2-deoxy-D-ribose 5-phosphate. The chain is Deoxyribose-phosphate aldolase from Mycolicibacterium paratuberculosis (strain ATCC BAA-968 / K-10) (Mycobacterium paratuberculosis).